The sequence spans 363 residues: Chorismate synthase (363 aa).

Arg-47 and Arg-53 together coordinate NADP(+). Residues 124–126 (RSS), Gly-286, 301–305 (KPTAT), and Arg-327 contribute to the FMN site.

This sequence belongs to the chorismate synthase family. In terms of assembly, homotetramer. Requires FMNH2 as cofactor.

The enzyme catalyses 5-O-(1-carboxyvinyl)-3-phosphoshikimate = chorismate + phosphate. It functions in the pathway metabolic intermediate biosynthesis; chorismate biosynthesis; chorismate from D-erythrose 4-phosphate and phosphoenolpyruvate: step 7/7. Catalyzes the anti-1,4-elimination of the C-3 phosphate and the C-6 proR hydrogen from 5-enolpyruvylshikimate-3-phosphate (EPSP) to yield chorismate, which is the branch point compound that serves as the starting substrate for the three terminal pathways of aromatic amino acid biosynthesis. This reaction introduces a second double bond into the aromatic ring system. The sequence is that of Chorismate synthase from Thermosynechococcus vestitus (strain NIES-2133 / IAM M-273 / BP-1).